Reading from the N-terminus, the 283-residue chain is Agmatinase (283 aa).

Residues H112, D131, H133, D135, D211, and D213 each coordinate a divalent metal cation.

Belongs to the arginase family. Agmatinase subfamily. Homotetramer. Requires a divalent metal cation as cofactor.

It catalyses the reaction agmatine + H2O = urea + putrescine. It participates in amine and polyamine biosynthesis; putrescine biosynthesis via agmatine pathway; putrescine from agmatine: step 1/1. Its activity is regulated as follows. Inhibited by putrescine. Activity is not affected by arginine and ornithine. Functionally, catalyzes the formation of putrescine from agmatine. Cannot use arginine. The protein is Agmatinase of Pyrococcus horikoshii (strain ATCC 700860 / DSM 12428 / JCM 9974 / NBRC 100139 / OT-3).